A 120-amino-acid chain; its full sequence is ATP-dependent Clp protease adapter protein ClpS (120 aa).

Residues M1–A27 are disordered.

This sequence belongs to the ClpS family. Binds to the N-terminal domain of the chaperone ClpA.

In terms of biological role, involved in the modulation of the specificity of the ClpAP-mediated ATP-dependent protein degradation. The chain is ATP-dependent Clp protease adapter protein ClpS from Pseudomonas putida (strain GB-1).